We begin with the raw amino-acid sequence, 299 residues long: Meso-diaminopimelate D-dehydrogenase (299 aa).

NADP(+)-binding positions include 11-14, arginine 36, 67-70, 90-92, and 119-123; these read YGNI, CTPT, SFD, and AGWDP. Substrate is bound by residues aspartate 92, aspartate 122, phenylalanine 146, 152–153, threonine 171, arginine 181, histidine 227, and asparagine 253; that span reads MG.

This sequence belongs to the diaminopimelate dehydrogenase family. Homodimer.

It catalyses the reaction meso-2,6-diaminopimelate + NADP(+) + H2O = (S)-2-amino-6-oxoheptanedioate + NH4(+) + NADPH + H(+). It participates in amino-acid biosynthesis; L-lysine biosynthesis via DAP pathway; DL-2,6-diaminopimelate from (S)-tetrahydrodipicolinate: step 1/1. Its function is as follows. Catalyzes the reversible NADPH-dependent reductive amination of L-2-amino-6-oxopimelate, the acyclic form of L-tetrahydrodipicolinate, to generate the meso compound, D,L-2,6-diaminopimelate. Probably plays a role in lysine biosynthesis. Exhibits a high substrate specificity for meso-2,6-diaminopimelate (m-DAP), since the activity with L,L-2,6-diaminopimelate is less than 5% of the activity observed with m-DAP. Can use NAD(+) only very poorly since the activity observed in the presence of NAD(+) is about 14% of that with NADP(+). In Bacteroides fragilis (strain ATCC 25285 / DSM 2151 / CCUG 4856 / JCM 11019 / LMG 10263 / NCTC 9343 / Onslow / VPI 2553 / EN-2), this protein is Meso-diaminopimelate D-dehydrogenase (ddh).